Reading from the N-terminus, the 352-residue chain is Chorismate synthase (352 aa).

NADP(+) is bound by residues Arg48 and Arg54. Residues 125-127, 238-239, Gly278, 293-297, and Arg319 each bind FMN; these read RSS, NA, and KPTSS.

Belongs to the chorismate synthase family. As to quaternary structure, homotetramer. FMNH2 is required as a cofactor.

It catalyses the reaction 5-O-(1-carboxyvinyl)-3-phosphoshikimate = chorismate + phosphate. It participates in metabolic intermediate biosynthesis; chorismate biosynthesis; chorismate from D-erythrose 4-phosphate and phosphoenolpyruvate: step 7/7. Catalyzes the anti-1,4-elimination of the C-3 phosphate and the C-6 proR hydrogen from 5-enolpyruvylshikimate-3-phosphate (EPSP) to yield chorismate, which is the branch point compound that serves as the starting substrate for the three terminal pathways of aromatic amino acid biosynthesis. This reaction introduces a second double bond into the aromatic ring system. The chain is Chorismate synthase from Bordetella petrii (strain ATCC BAA-461 / DSM 12804 / CCUG 43448).